Reading from the N-terminus, the 68-residue chain is DNA gyrase inhibitor YacG (68 aa).

Residues Cys-10, Cys-13, Cys-29, and Cys-33 each contribute to the Zn(2+) site.

Belongs to the DNA gyrase inhibitor YacG family. As to quaternary structure, interacts with GyrB. The cofactor is Zn(2+).

Inhibits all the catalytic activities of DNA gyrase by preventing its interaction with DNA. Acts by binding directly to the C-terminal domain of GyrB, which probably disrupts DNA binding by the gyrase. In Haemophilus influenzae (strain PittGG), this protein is DNA gyrase inhibitor YacG.